The chain runs to 169 residues: Cell cycle link protein (169 aa).

The segment at 9-22 is binding to host SKP1 protein; sequence LPEELRQKIVHDHL. Residues 110–114 carry the LXCXE motif, interaction with host RBR motif; the sequence is LLCRE.

The protein belongs to the nanovirus Clink protein family. As to quaternary structure, interacts with host SKP1. Interacts (via LXCXE domain) with host retinoblastoma-related protein 1 (RBR1). Interacts (via LXCXE domain) with retinoblastoma-related proteins (RBR).

In terms of biological role, interacts with and disrupts the function of host retinoblastoma-related proteins RBR, which are key regulators of the cell cycle. Induces transcriptional activation of E2F-regulated S-phase and G2/M-phase-specific genes. Inactivation of the ability of RBR to arrest the cell cycle leads to the stimulation of viral DNA replication. The chain is Cell cycle link protein (DNA-C) from Cicer arietinum (Chickpea).